The chain runs to 294 residues: Negative regulator of the PHO system (294 aa).

A Protein kinase domain is found at 7–289 (FQQLEKLGEG…ARQSLEHPWF (283 aa)). Residues 13-21 (LGEGTYATV) and Lys36 contribute to the ATP site. The active-site Proton acceptor is Asp130.

This sequence belongs to the protein kinase superfamily. CMGC Ser/Thr protein kinase family. CDC2/CDKX subfamily. As to quaternary structure, interacts with a number of cyclins.

The enzyme catalyses L-seryl-[protein] + ATP = O-phospho-L-seryl-[protein] + ADP + H(+). The catalysed reaction is L-threonyl-[protein] + ATP = O-phospho-L-threonyl-[protein] + ADP + H(+). Its function is as follows. When phosphate concentrations are high it phosphorylates the PHO4 transcription factor thus establishing repression. In Yarrowia lipolytica (strain CLIB 122 / E 150) (Yeast), this protein is Negative regulator of the PHO system (PHO85).